A 358-amino-acid polypeptide reads, in one-letter code: Alanine racemase, biosynthetic (358 aa).

Lys-34 acts as the Proton acceptor; specific for D-alanine in catalysis. Lys-34 is subject to N6-(pyridoxal phosphate)lysine. A substrate-binding site is contributed by Arg-130. The active-site Proton acceptor; specific for L-alanine is the Tyr-254. Met-302 serves as a coordination point for substrate.

Belongs to the alanine racemase family. The cofactor is pyridoxal 5'-phosphate.

It carries out the reaction L-alanine = D-alanine. Its pathway is amino-acid biosynthesis; D-alanine biosynthesis; D-alanine from L-alanine: step 1/1. The protein operates within cell wall biogenesis; peptidoglycan biosynthesis. Catalyzes the interconversion of L-alanine and D-alanine. Provides the D-alanine required for cell wall biosynthesis. The sequence is that of Alanine racemase, biosynthetic (alr) from Pseudomonas aeruginosa (strain ATCC 15692 / DSM 22644 / CIP 104116 / JCM 14847 / LMG 12228 / 1C / PRS 101 / PAO1).